Here is an 875-residue protein sequence, read N- to C-terminus: Probable ATP-dependent RNA helicase DDX10 (875 aa).

The tract at residues 1-44 is disordered; the sequence is MGKTVASLGQGTRPDPVRSFNRWKKKHSHRQHQKKERRKQLKKP. T4 carries the phosphothreonine modification. Phosphoserine is present on S7. The span at 21 to 41 shows a compositional bias: basic residues; that stretch reads NRWKKKHSHRQHQKKERRKQL. The Q motif motif lies at 69 to 97; it reads TRFSDFPLSKKTLKGLQEAQYRLVTEIQK. ATP is bound by residues 89–91, Q96, and 113–120; these read YRL and AKTGSGKT. A Helicase ATP-binding domain is found at 100 to 274; that stretch reads IGLALQGKDV…RLSLKDPEYV (175 aa). Positions 222–225 match the DEAD box motif; it reads DEAD. Residues 300-449 form the Helicase C-terminal domain; the sequence is KISVLFSFLR…EIKINPEKLI (150 aa). The disordered stretch occupies residues 525–612; sequence LVKNPVTEAV…HTESVVSIEE (88 aa). Phosphoserine is present on S540. K556 is subject to N6-acetyllysine. Residues 562 to 575 are compositionally biased toward basic and acidic residues; sequence KSGERLEETEHRLA. The span at 578–593 shows a compositional bias: acidic residues; that stretch reads DGDEEQDEETEDEETE. Position 587 is a phosphothreonine (T587). Residues 594-604 show a composition bias toward basic and acidic residues; sequence DHLGKAREPHT. A Glycyl lysine isopeptide (Lys-Gly) (interchain with G-Cter in SUMO2) cross-link involves residue K652. A compositionally biased stretch (basic and acidic residues) spans 734–744; that stretch reads EEDKFDKEEYR. The interval 734–860 is disordered; that stretch reads EEDKFDKEEY…VEPLDTGLSL (127 aa). Residues 745 to 754 show a composition bias toward basic residues; sequence KKIKAKHRER. Residues 755–774 show a composition bias toward basic and acidic residues; sequence RLKEREARREANKRQAKARD. Residues 775-789 show a composition bias toward acidic residues; it reads EEEAFLDWSDEDDGG. Residue S783 is modified to Phosphoserine. Residues 797-831 are compositionally biased toward basic and acidic residues; sequence DPDKHRSSEESESEDTNHKMSDTKKKQETRKRNNT.

The protein belongs to the DEAD box helicase family. DDX10/DBP4 subfamily. Interacts with AIM2; this interaction promotes AIM2 stability. Interacts with SCNA; this interaction causes DDX10 mislocalization to the nucleoplasm and cytoplasmic inclusions.

It localises to the cytoplasm. Its subcellular location is the nucleus. The protein resides in the nucleolus. It catalyses the reaction ATP + H2O = ADP + phosphate + H(+). In terms of biological role, putative ATP-dependent RNA helicase that plays various role in innate immunity or inflammation. Plays a role in the enhancement of AIM2-induced inflammasome activation by interacting with AIM2 and stabilizing its protein level. Negatively regulates viral infection by promoting interferon beta production and interferon stimulated genes/ISGs expression. The polypeptide is Probable ATP-dependent RNA helicase DDX10 (Ddx10) (Mus musculus (Mouse)).